The chain runs to 331 residues: Major ferric iron-binding protein (331 aa).

The N-terminal stretch at 1-22 (MKTSIRYALLAAALTAATPALA) is a signal peptide. Residues H31, E79, Y217, and Y218 each contribute to the Fe cation site.

It belongs to the bacterial solute-binding protein 1 family.

Its subcellular location is the periplasm. Its function is as follows. This protein may be a central component in the iron-acquisition system. This chain is Major ferric iron-binding protein (fbpA), found in Neisseria meningitidis serogroup A / serotype 4A (strain DSM 15465 / Z2491).